Consider the following 1233-residue polypeptide: Hemocyanin A-type, units Ode to Odg (1233 aa).

The interval E1–E4 is ODD. Residues Y5–L422 form an ODE region. H45 is a binding site for Cu cation. A disulfide bond links C51 and C62. A cross-link (2'-(S-cysteinyl)-histidine (Cys-His)) is located at residues C63–H65. Residues H65, H74, H186, H190, and H217 each coordinate Cu cation. Intrachain disulfides connect C176/C243 and C334/C340. An N-linked (GlcNAc...) asparagine glycan is attached at N392. The ODF stretch occupies residues N423–G839. Residue H463 participates in Cu cation binding. An intrachain disulfide couples C468 to C478. Positions C479–H481 form a cross-link, 2'-(S-cysteinyl)-histidine (Cys-His). The Cu cation site is built by H481 and H490. N-linked (GlcNAc...) asparagine glycosylation is present at N538. 2 cysteine pairs are disulfide-bonded: C589–C656 and C743–C748. The Cu cation site is built by H599, H603, and H630. The interval T840–H1233 is ODG. H880 lines the Cu cation pocket. C886 and C896 form a disulfide bridge. The N-linked (GlcNAc...) asparagine glycan is linked to N890. Residues C897–H899 constitute a cross-link (2'-(S-cysteinyl)-histidine (Cys-His)). 5 residues coordinate Cu cation: H899, H908, H1008, H1012, and H1039. Cystine bridges form between C998–C1065 and C1152–C1158.

The protein belongs to the tyrosinase family. Hemocyanin subfamily. In terms of assembly, decamers of large identical subunits (350 kDa), each containing 7 globular oxygen-binding domains: ODA, ODB, ODC, ODD, ODE, ODF, and ODG. It depends on Cu(2+) as a cofactor.

In terms of biological role, hemocyanins are copper-containing oxygen carriers occurring freely dissolved in the hemolymph of many mollusks and arthropods. The protein is Hemocyanin A-type, units Ode to Odg of Enteroctopus dofleini (North Pacific giant octopus).